A 202-amino-acid polypeptide reads, in one-letter code: Adenylyl-sulfate kinase (202 aa).

Residue 31–38 (GLSASGKS) coordinates ATP. The active-site Phosphoserine intermediate is serine 105.

Belongs to the APS kinase family.

The enzyme catalyses adenosine 5'-phosphosulfate + ATP = 3'-phosphoadenylyl sulfate + ADP + H(+). It functions in the pathway sulfur metabolism; hydrogen sulfide biosynthesis; sulfite from sulfate: step 2/3. Catalyzes the synthesis of activated sulfate. The chain is Adenylyl-sulfate kinase (MET14) from Saccharomyces cerevisiae (strain ATCC 204508 / S288c) (Baker's yeast).